Consider the following 70-residue polypeptide: Putative antitoxin VapB34 (70 aa).

Functionally, antitoxin component of a possible type II toxin-antitoxin (TA) system. The cognate toxin is VapC34. In Mycobacterium tuberculosis (strain CDC 1551 / Oshkosh), this protein is Putative antitoxin VapB34 (vapB34).